Consider the following 104-residue polypeptide: Large ribosomal subunit protein uL24 (104 aa).

The protein belongs to the universal ribosomal protein uL24 family. In terms of assembly, part of the 50S ribosomal subunit.

Functionally, one of two assembly initiator proteins, it binds directly to the 5'-end of the 23S rRNA, where it nucleates assembly of the 50S subunit. In terms of biological role, one of the proteins that surrounds the polypeptide exit tunnel on the outside of the subunit. In Sodalis glossinidius (strain morsitans), this protein is Large ribosomal subunit protein uL24.